The sequence spans 155 residues: 6,7-dimethyl-8-ribityllumazine synthase (155 aa).

5-amino-6-(D-ribitylamino)uracil is bound by residues F22, 57–59 (AYE), and 81–83 (SVI). 86 to 87 (GT) lines the (2S)-2-hydroxy-3-oxobutyl phosphate pocket. Residue H88 is the Proton donor of the active site. Residue F113 coordinates 5-amino-6-(D-ribitylamino)uracil. R127 is a binding site for (2S)-2-hydroxy-3-oxobutyl phosphate.

It belongs to the DMRL synthase family. Forms an icosahedral capsid composed of 60 subunits, arranged as a dodecamer of pentamers.

The catalysed reaction is (2S)-2-hydroxy-3-oxobutyl phosphate + 5-amino-6-(D-ribitylamino)uracil = 6,7-dimethyl-8-(1-D-ribityl)lumazine + phosphate + 2 H2O + H(+). It participates in cofactor biosynthesis; riboflavin biosynthesis; riboflavin from 2-hydroxy-3-oxobutyl phosphate and 5-amino-6-(D-ribitylamino)uracil: step 1/2. Functionally, catalyzes the formation of 6,7-dimethyl-8-ribityllumazine by condensation of 5-amino-6-(D-ribitylamino)uracil with 3,4-dihydroxy-2-butanone 4-phosphate. This is the penultimate step in the biosynthesis of riboflavin. The sequence is that of 6,7-dimethyl-8-ribityllumazine synthase from Photobacterium phosphoreum.